A 472-amino-acid polypeptide reads, in one-letter code: Pentatricopeptide repeat-containing protein At3g18970 (472 aa).

8 PPR repeats span residues 107–139 (NERT…MVKK), 146–180 (SELI…TSVT), 181–216 (WNAM…GSGV), 219–253 (TDTT…GFTP), 256–286 (DVFI…MKVK), 287–321 (NVFT…GIKP), 322–352 (NEIT…MKTR), and 358–388 (VIEH…MPIK). The interval 393–472 (LLRSLCNACS…IKTRPGYSFV (80 aa)) is type E motif; degenerate.

The protein belongs to the PPR family. PCMP-E subfamily.

In Arabidopsis thaliana (Mouse-ear cress), this protein is Pentatricopeptide repeat-containing protein At3g18970 (PCMP-E93).